The primary structure comprises 402 residues: Multidrug resistance protein MdtH (402 aa).

Residues 1–12 (MSRVSQARNLGK) lie on the Cytoplasmic side of the membrane. Residues 13-33 (YFLLIDNMLVVLVFFVVFPLI) traverse the membrane as a helical segment. Residues 34–98 (SIRFVDQMGW…GFATMGIAHE (65 aa)) are Periplasmic-facing. A helical membrane pass occupies residues 99 to 116 (PWLLWFSCFLSGLGGTLF). The Cytoplasmic portion of the chain corresponds to 117–138 (DPPRSALVVKLIRPEQRGRFFS). Residues 139 to 159 (LLMMQDSAGAVIGALLGSWLL) traverse the membrane as a helical segment. The Periplasmic portion of the chain corresponds to 160-164 (QYDFR). A helical membrane pass occupies residues 165–185 (LVCATGAILFILCALFNAWLL). Topologically, residues 186 to 213 (PAWKLSTVRTPVREGMRRVMSDKRFVTY) are cytoplasmic. Residues 214–234 (VLTLAGYYMLAVQVMLMLPIM) form a helical membrane-spanning segment. Topologically, residues 235–243 (VNDIAGSPA) are periplasmic. A helical transmembrane segment spans residues 244 to 264 (AVKWMYAIEACLSLTLLYPIA). Residues 265 to 276 (RWSEKRFRLEHR) are Cytoplasmic-facing. A helical transmembrane segment spans residues 277–297 (LMAGLLVMSLSMIPIGMVGNL). At 298–299 (QQ) the chain is on the periplasmic side. The helical transmembrane segment at 300–320 (LFTLICAFYIGSVIAEPARET) threads the bilayer. Over 321-339 (LSASLADARARGSYMGFSR) the chain is Cytoplasmic. The chain crosses the membrane as a helical span at residues 340 to 360 (LGLAIGGAIGYIGGGWLFDMG). Residues 361 to 367 (KALTQPE) lie on the Periplasmic side of the membrane. A helical membrane pass occupies residues 368–388 (LPWMMLGIIGFITFLALGWQF). Residues 389–402 (SHKRTPRRMLEPGA) are Cytoplasmic-facing.

It belongs to the major facilitator superfamily. DHA1 family. MdtH (TC 2.A.1.2.21) subfamily.

The protein resides in the cell inner membrane. This chain is Multidrug resistance protein MdtH, found in Salmonella choleraesuis (strain SC-B67).